The chain runs to 141 residues: Hemoglobin subunit alpha (141 aa).

The Globin domain maps to 1–141 (VLSAADKTNV…VSTVLTSKYR (141 aa)). At Ser-3 the chain carries Phosphoserine. The residue at position 7 (Lys-7) is an N6-succinyllysine. Position 8 is a phosphothreonine (Thr-8). At Lys-11 the chain carries N6-succinyllysine. The residue at position 16 (Lys-16) is an N6-acetyllysine; alternate. The residue at position 16 (Lys-16) is an N6-succinyllysine; alternate. Ser-35 is modified (phosphoserine). Residue Lys-40 is modified to N6-succinyllysine. Residue Ser-49 is modified to Phosphoserine. An O2-binding site is contributed by His-58. Heme b is bound at residue His-87. A Phosphoserine modification is found at Ser-102. Residue Thr-108 is modified to Phosphothreonine. Phosphoserine occurs at positions 124 and 131. Phosphothreonine occurs at positions 134 and 137. Ser-138 is subject to Phosphoserine.

This sequence belongs to the globin family. As to quaternary structure, heterotetramer of two alpha chains and two beta chains. Red blood cells.

Functionally, involved in oxygen transport from the lung to the various peripheral tissues. The chain is Hemoglobin subunit alpha from Sciurus carolinensis (Eastern gray squirrel).